The primary structure comprises 310 residues: Homoserine O-acetyltransferase (310 aa).

Cys-142 serves as the catalytic Acyl-thioester intermediate. Substrate is bound by residues Lys-163 and Ser-192. The active-site Proton acceptor is the His-235. Residue Glu-237 is part of the active site. Arg-249 lines the substrate pocket.

This sequence belongs to the MetA family.

It is found in the cytoplasm. It carries out the reaction L-homoserine + acetyl-CoA = O-acetyl-L-homoserine + CoA. Its pathway is amino-acid biosynthesis; L-methionine biosynthesis via de novo pathway; O-acetyl-L-homoserine from L-homoserine: step 1/1. In terms of biological role, transfers an acetyl group from acetyl-CoA to L-homoserine, forming acetyl-L-homoserine. The polypeptide is Homoserine O-acetyltransferase (Parabacteroides distasonis (strain ATCC 8503 / DSM 20701 / CIP 104284 / JCM 5825 / NCTC 11152)).